We begin with the raw amino-acid sequence, 360 residues long: Phenylalanine--tRNA ligase alpha subunit (360 aa).

Position 260 (E260) interacts with Mg(2+).

The protein belongs to the class-II aminoacyl-tRNA synthetase family. Phe-tRNA synthetase alpha subunit type 1 subfamily. As to quaternary structure, tetramer of two alpha and two beta subunits. Mg(2+) is required as a cofactor.

Its subcellular location is the cytoplasm. The enzyme catalyses tRNA(Phe) + L-phenylalanine + ATP = L-phenylalanyl-tRNA(Phe) + AMP + diphosphate + H(+). This chain is Phenylalanine--tRNA ligase alpha subunit, found in Bartonella tribocorum (strain CIP 105476 / IBS 506).